A 106-amino-acid chain; its full sequence is Urease subunit beta (106 aa).

It belongs to the urease beta subunit family. In terms of assembly, heterotrimer of UreA (gamma), UreB (beta) and UreC (alpha) subunits. Three heterotrimers associate to form the active enzyme.

The protein resides in the cytoplasm. It carries out the reaction urea + 2 H2O + H(+) = hydrogencarbonate + 2 NH4(+). Its pathway is nitrogen metabolism; urea degradation; CO(2) and NH(3) from urea (urease route): step 1/1. The protein is Urease subunit beta of Parasynechococcus marenigrum (strain WH8102).